The sequence spans 989 residues: Atos homolog protein A (989 aa).

A transactivation domain 1 (TAD1) region spans residues Thr-24–Thr-32. Disordered stretches follow at residues Gly-244–Gly-295, Pro-393–Thr-477, Gln-525–Gln-639, and Glu-656–Asn-686. Over residues Arg-254–His-270 the composition is skewed to low complexity. The segment covering Phe-397–Thr-412 has biased composition (polar residues). Basic and acidic residues-rich tracts occupy residues Gln-413–Asp-423 and Thr-460–Thr-471. Polar residues-rich tracts occupy residues Gln-525 to Ser-544 and Thr-600 to Thr-638. Basic and acidic residues predominate over residues Glu-656 to Glu-675. A compositionally biased stretch (polar residues) spans Pro-676 to Asn-686. Positions Leu-792 to Tyr-849 are required for macropage invasion. The tract at residues Phe-876 to Lys-884 is transactivation domain 2 (TAD2).

The protein belongs to the ATOS family.

The protein localises to the nucleus. Transcription regulator that syncronizes transcriptional and translational programs to promote macrophage invasion of tissues. In Danio rerio (Zebrafish), this protein is Atos homolog protein A (atosa).